The chain runs to 199 residues: Venom allergen 5 (199 aa).

Cystine bridges form between Cys21–Cys87 and Cys167–Cys184. The 149-residue stretch at 38-186 (LKVHNDERQK…FYKCYLACNY (149 aa)) folds into the SCP domain. Residues 47 to 67 (KVKAGQETRGNPGPQPAASNM) form a disordered region.

This sequence belongs to the CRISP family. Venom allergen 5-like subfamily. Expressed by the venom gland.

The protein resides in the secreted. The protein is Venom allergen 5 of Brachyponera chinensis (Asian needle ant).